A 257-amino-acid chain; its full sequence is 4-diphosphocytidyl-2-C-methyl-D-erythritol kinase (257 aa).

The active site involves K8. Residue 91–101 (PMGGGLGGGSA) participates in ATP binding. Residue D131 is part of the active site.

Belongs to the GHMP kinase family. IspE subfamily.

It carries out the reaction 4-CDP-2-C-methyl-D-erythritol + ATP = 4-CDP-2-C-methyl-D-erythritol 2-phosphate + ADP + H(+). Its pathway is isoprenoid biosynthesis; isopentenyl diphosphate biosynthesis via DXP pathway; isopentenyl diphosphate from 1-deoxy-D-xylulose 5-phosphate: step 3/6. Functionally, catalyzes the phosphorylation of the position 2 hydroxy group of 4-diphosphocytidyl-2C-methyl-D-erythritol. The polypeptide is 4-diphosphocytidyl-2-C-methyl-D-erythritol kinase (Petrotoga mobilis (strain DSM 10674 / SJ95)).